We begin with the raw amino-acid sequence, 86 residues long: Large ribosomal subunit protein bL27 (86 aa).

The segment at 1–26 is disordered; it reads MATKKAGGSSRNGRDSAGRRLGVKKS.

This sequence belongs to the bacterial ribosomal protein bL27 family.

The protein is Large ribosomal subunit protein bL27 of Rickettsia prowazekii (strain Madrid E).